The following is a 146-amino-acid chain: MKIYVDADACPVKDVIIFEATKAEIPVTLVTSFSHYSNAEQPKGVETIYVDSGADAADYRIMQLAKKEDLIVTQDYGLASLALAKGCIVLHHKGYKYTNENIDQLLQTRYLSAMVRKSGKRTKGPKPFTAEDKEKFRALFKSIIAL.

It belongs to the UPF0178 family.

This Bacillus cereus (strain ZK / E33L) protein is UPF0178 protein BCE33L2782.